Here is a 270-residue protein sequence, read N- to C-terminus: Replication protein A 32 kDa subunit (270 aa).

M1 is modified (N-acetylmethionine). S4 and S8 each carry phosphoserine; by PRKDC. Residues 20–41 (YTQSPGGFGSPTPSQAEKKSRV) are disordered. At T21 the chain carries Phosphothreonine; by PRKDC. S23 carries the phosphoserine; by CDK2 modification. The residue at position 29 (S29) is a Phosphoserine; by CDK1. The residue at position 33 (S33) is a Phosphoserine; by PRKDC. Glycyl lysine isopeptide (Lys-Gly) (interchain with G-Cter in ubiquitin) cross-links involve residues K37 and K38. Residues 74-148 (VTIVGIIRHA…KSLVAFKIIP (75 aa)) constitute a DNA-binding region (OB). The tract at residues 171–192 (KPNSQASAGRPSMSNPGMSEPG) is disordered. An interaction with RAD52, TIPIN, UNG and XPA region spans residues 187–270 (GMSEPGNFSG…DDHFKSTDAE (84 aa)).

It belongs to the replication factor A protein 2 family. In terms of assembly, component of the replication protein A complex (RPA/RP-A), a heterotrimeric complex composed of RPA1, RPA2 and RPA3. Interacts with PRPF19; the PRP19-CDC5L complex is recruited to the sites of DNA repair where it ubiquitinates the replication protein A complex (RPA). Interacts with SERTAD3. Interacts with TIPIN. Interacts with TIMELESS. Interacts with PPP4R2; the interaction is direct, DNA damage-dependent and mediates the recruitment of the PP4 catalytic subunit PPP4C. Interacts (hyperphosphorylated) with RAD51. Interacts with SMARCAL1; the interaction is direct and mediates the recruitment to the RPA complex of SMARCAL1. Interacts with RAD52 and XPA; those interactions are direct and associate RAD52 and XPA to the RPA complex. Interacts with FBH1. Interacts with ETAA1; the interaction is direct and promotes ETAA1 recruitment at stalled replication forks. Interacts with DDI2. Interacts (in unphosphorylated form via N-terminus) with EIF4EBP3; the interaction enhances EIF4EBP3-mediated inhibition of EIF4E-mediated mRNA nuclear export. Interacts with nuclear UNG (isoform 2); this interaction mediates UNG recruitment to RPA-coated single-stranded DNA at stalled replication forks. In terms of processing, differentially phosphorylated throughout the cell cycle, becoming phosphorylated at the G1-S transition and dephosphorylated in late mitosis. Mainly phosphorylated at Ser-23 and Ser-29, by cyclin A-CDK2 and cyclin B-CDK1, respectively during DNA replication and mitosis. Dephosphorylation may require the serine/threonine-protein phosphatase 4. Phosphorylation at Ser-23 and Ser-29 is a prerequisite for further phosphorylation. Becomes hyperphosphorylated on additional residues including Ser-4, Ser-8, Thr-21 and Ser-33 in response to DNA damage. Hyperphosphorylation is mediated by ATM, ATR and PRKDC. Primarily recruited to DNA repair nuclear foci as a hypophosphorylated form it undergoes subsequent hyperphosphorylation, catalyzed by ATR. Hyperphosphorylation is required for RAD51 recruitment to chromatin and efficient DNA repair. Phosphorylation at Thr-21 depends upon RFWD3 presence. DNA damage-induced 'Lys-63'-linked polyubiquitination by PRPF19 mediates ATRIP recruitment to the RPA complex at sites of DNA damage and activation of ATR. Ubiquitinated by RFWD3 at stalled replication forks in response to DNA damage: ubiquitination by RFWD3 does not lead to degradation by the proteasome and promotes removal of the RPA complex from stalled replication forks, promoting homologous recombination.

It is found in the nucleus. It localises to the PML body. In terms of biological role, as part of the heterotrimeric replication protein A complex (RPA/RP-A), binds and stabilizes single-stranded DNA intermediates, that form during DNA replication or upon DNA stress. It prevents their reannealing and in parallel, recruits and activates different proteins and complexes involved in DNA metabolism. Thereby, it plays an essential role both in DNA replication and the cellular response to DNA damage. In the cellular response to DNA damage, the RPA complex controls DNA repair and DNA damage checkpoint activation. Through recruitment of ATRIP activates the ATR kinase a master regulator of the DNA damage response. It is required for the recruitment of the DNA double-strand break repair factors RAD51 and RAD52 to chromatin in response to DNA damage. Also recruits to sites of DNA damage proteins like XPA and XPG that are involved in nucleotide excision repair and is required for this mechanism of DNA repair. Also plays a role in base excision repair (BER) probably through interaction with UNG. Also recruits SMARCAL1/HARP, which is involved in replication fork restart, to sites of DNA damage. May also play a role in telomere maintenance. The protein is Replication protein A 32 kDa subunit of Mus musculus (Mouse).